The primary structure comprises 461 residues: Acetylcholine receptor subunit alpha (461 aa).

An N-terminal signal peptide occupies residues 1–24 (MILCSYWHVGLVLLLFSCCGLVLG). Over 25–234 (SEHETRLVAN…ITYHFIMQRI (210 aa)) the chain is Extracellular. 2 disulfide bridges follow: cysteine 152–cysteine 166 and cysteine 216–cysteine 217. N-linked (GlcNAc...) asparagine glycosylation occurs at asparagine 165. Helical transmembrane passes span 235–259 (PLYF…VFYL), 267–285 (MTLS…LVIV), and 301–320 (YMLF…VVVI). The Cytoplasmic segment spans residues 321–432 (NTHHRSPSTH…WKYVAMVIDH (112 aa)). Residues 433–451 (ILLCVFMLICIIGTVSVFA) form a helical membrane-spanning segment.

It belongs to the ligand-gated ion channel (TC 1.A.9) family. Acetylcholine receptor (TC 1.A.9.1) subfamily. Alpha-1/CHRNA1 sub-subfamily. In terms of assembly, pentamer of two alpha chains, and one each of the beta, delta, and gamma chains.

Its subcellular location is the postsynaptic cell membrane. It is found in the cell membrane. It carries out the reaction K(+)(in) = K(+)(out). It catalyses the reaction Na(+)(in) = Na(+)(out). Functionally, upon acetylcholine binding, the AChR responds by an extensive change in conformation that affects all subunits and leads to opening of an ion-conducting channel across the plasma membrane. This Tetronarce californica (Pacific electric ray) protein is Acetylcholine receptor subunit alpha (CHRNA1).